Reading from the N-terminus, the 1552-residue chain is ABC multidrug transporter lscH (1552 aa).

Transmembrane regions (helical) follow at residues 32–52 (ETIL…IPII) and 68–88 (WFKK…VGLW). Residue asparagine 91 is glycosylated (N-linked (GlcNAc...) asparagine). 8 helical membrane passes run 100–120 (STPS…LSTI), 158–178 (HSAI…MLLL), 280–300 (LFQI…IELA), 311–331 (NGYG…VSVG), 413–433 (AACV…VFLA), 457–477 (ALAS…FSVI), 500–520 (ILSI…FAGI), and 528–548 (LTIA…SPLA). In terms of domain architecture, ABC transmembrane type-1 1 spans 280 to 559 (LFQIGFTYAQ…IVQALPQISG (280 aa)). Residues 573–655 (AEERHDPRST…PDANGDSRDA (83 aa)) are disordered. Polar residues predominate over residues 581-602 (STTTGTSPESNNGSQQTLSDKQ). Asparagine 592 is a glycosylation site (N-linked (GlcNAc...) asparagine). In terms of domain architecture, ABC transporter 1 spans 639-884 (GHLADTTPDA…AELGWADRDL (246 aa)). ATP is bound at residue 676-683 (GPVGCGKS). 2 N-linked (GlcNAc...) asparagine glycosylation sites follow: asparagine 719 and asparagine 834. The span at 887–912 (QQEKPGKDELNHEHGEYSESAPEKLR) shows a compositional bias: basic and acidic residues. The tract at residues 887–917 (QQEKPGKDELNHEHGEYSESAPEKLRRSQTN) is disordered. The next 2 helical transmembrane spans lie at 957 to 977 (GWLT…CDSF) and 1005 to 1025 (AVLG…LFII). An ABC transmembrane type-1 2 domain is found at 963-1241 (IFVIAICVYA…ATITSWVTLE (279 aa)). Asparagine 1028 carries N-linked (GlcNAc...) asparagine glycosylation. 4 consecutive transmembrane segments (helical) span residues 1076–1096 (AALG…LVCV), 1100–1120 (YMAA…HFYL), 1184–1204 (WITF…IVLT), and 1210–1230 (AIGP…SATM). Residues 1295-1538 (IELDNVTASY…PTSIFKELYL (244 aa)) enclose the ABC transporter 2 domain. Asparagine 1299 and asparagine 1313 each carry an N-linked (GlcNAc...) asparagine glycan. 1328 to 1335 (GRTGSGKS) is an ATP binding site.

The protein belongs to the ABC transporter superfamily. ABCC family. Conjugate transporter (TC 3.A.1.208) subfamily.

It is found in the cell membrane. Functionally, ABC multidrug transporter; part of the gene cluster that mediates the biosynthesis of the lipopeptide antibiotics leucinostatins that show extensive biological activities, including antimalarial, antiviral, antibacterial, antifungal, and antitumor activities, as well as phytotoxic. May be involved in the efflux of leucinostatins. This is ABC multidrug transporter lscH from Purpureocillium lilacinum (Paecilomyces lilacinus).